We begin with the raw amino-acid sequence, 182 residues long: Lipoprotein signal peptidase (182 aa).

The next 4 membrane-spanning stretches (helical) occupy residues 15–35, 44–64, 65–85, and 97–117; these read IYLGVIFLGIVLDLVTKFLVI, LEVFGSFFRMTLTFNTGFVFG, AFQDNAIPSLIATGVAIVFLI, and PWGWNLVMAGAFGNFLDKFFV. Active-site residues include D140 and D162. A helical transmembrane segment spans residues 155-175; it reads WPAFNVADSCVTIGLTILIFT.

This sequence belongs to the peptidase A8 family.

It localises to the cell inner membrane. The enzyme catalyses Release of signal peptides from bacterial membrane prolipoproteins. Hydrolyzes -Xaa-Yaa-Zaa-|-(S,diacylglyceryl)Cys-, in which Xaa is hydrophobic (preferably Leu), and Yaa (Ala or Ser) and Zaa (Gly or Ala) have small, neutral side chains.. It functions in the pathway protein modification; lipoprotein biosynthesis (signal peptide cleavage). Its function is as follows. This protein specifically catalyzes the removal of signal peptides from prolipoproteins. In Leptospira interrogans serogroup Icterohaemorrhagiae serovar Lai (strain 56601), this protein is Lipoprotein signal peptidase.